Reading from the N-terminus, the 773-residue chain is Angiomotin-like protein 2 (773 aa).

3 disordered regions span residues Gly-41–Ser-157, Arg-169–Phe-238, and Gln-259–Met-309. Composition is skewed to basic and acidic residues over residues Gln-80–Leu-91, Lys-100–Ala-112, and Arg-141–His-152. The tract at residues Gly-101 to Gly-302 is required for interaction with CDH5. Tyr-107 is modified (phosphotyrosine; by FGFR1). The segment covering His-177–Ser-190 has biased composition (polar residues). The span at Pro-196–Tyr-213 shows a compositional bias: pro residues. Positions Gln-220–Gly-302 are required for interaction with CDH1. Residues Ala-304–Gln-577 adopt a coiled-coil conformation. Residues Lys-342 and Lys-403 each participate in a glycyl lysine isopeptide (Lys-Gly) (interchain with G-Cter in ubiquitin) cross-link. 2 disordered regions span residues Gln-589–Leu-611 and Trp-677–Leu-754. Pro residues predominate over residues Glu-701–Pro-710. Polar residues predominate over residues Asp-719–Cys-734. 2 positions are modified to phosphoserine: Ser-753 and Ser-756. The PDZ-binding motif lies at Glu-770 to Ile-773.

It belongs to the angiomotin family. As to quaternary structure, part of a complex composed of AMOTL2, MAGI1 and CDH5, within the complex AMOTL2 acts as a scaffold protein for the interaction of MAGI1 with CDH5. The complex is required for coupling actin fibers to cell junctions in endothelial cells. Within the complex AMOTL2 (via its N-terminus) interacts with CDH5. Interacts (via N-terminus) with MAGI1. Interacts (via N-terminus) with ACTB; the interaction facilitates binding of cell junction complexes to actin fibers in endothelial cells. Interacts with CDH1; the interaction may facilitate binding of radial actin fibers to cell junction complexes. Interacts with SRC. Interacts with YAP1; the interaction is required for ubiquitination of AMOTL2 and localization of YAP1 to tight junctions. Interacts with WWP1; the interaction facilitates WWP1 interaction with the Crumbs complex and subsequent WWP1 translocation to the plasma membrane. WWP1 interaction with the Crumbs complex promotes WWP1 monoubiquitination of AMOTL2 which subsequently activates the Hippo signaling pathway. When ubiquitinated interacts with LATS2 (via UBA domain); the interaction promotes LATS2 phosphorylation of YAP1. Interacts (via PPXY motif) with WWTR1/TAZ (via WW domain); the interaction promotes WWTR1/TAZ localization to the cytoplasm and thereby inhibition of its transcriptional properties. Interacts with PHLDB2; interaction may facilitate PHLDB2 localization to the myotube podosome cortex that surrounds the core. Post-translationally, monoubiquitinated at Lys-342 and Lys-403 by Crumbs complex-bound WWP1. De-ubiquitinated at Lys-342 and Lys-403 by USP9X; the interaction may be promoted by cell contact inhibition. Deubiquitination of AMOTL2 negatively regulates Hippo signaling activation. In terms of processing, phosphorylation at Tyr-107 is necessary for efficient binding to SRC and synergistically functioning with SRC to activate the downstream MAPK pathway.

It is found in the recycling endosome. Its subcellular location is the cytoplasm. It localises to the cell projection. The protein resides in the podosome. The protein localises to the cell junction. Functionally, regulates the translocation of phosphorylated SRC to peripheral cell-matrix adhesion sites. Required for proper architecture of actin filaments. Plays a role in coupling actin fibers to cell junctions in endothelial cells and is therefore required for correct endothelial cell morphology via facilitating transcellular transmission of mechanical force resulting in endothelial cell elongation. Required for the anchoring of radial actin fibers to CDH1 junction complexes at the cell membrane which facilitates organization of radial actin fiber structure and cellular response to contractile forces. This contributes to maintenance of cell area, size, shape, epithelial sheet organization and trophectoderm cell properties that facilitate blastocyst zona hatching. Inhibits the Wnt/beta-catenin signaling pathway, probably by recruiting CTNNB1 to recycling endosomes and hence preventing its translocation to the nucleus. Participates in angiogenesis. Activates the Hippo signaling pathway in response to cell contact inhibition via interaction with and ubiquitination by Crumbs complex-bound WWP1. Ubiquitinated AMOTL2 then interacts with LATS2 which in turn phosphorylates YAP1, excluding it from the nucleus and localizing it to the cytoplasm and tight junctions, therefore ultimately repressing YAP1-driven transcription of target genes. Acts to inhibit WWTR1/TAZ transcriptional coactivator activity via sequestering WWTR1/TAZ in the cytoplasm and at tight junctions. Regulates the size and protein composition of the podosome cortex and core at myofibril neuromuscular junctions. Selectively promotes FGF-induced MAPK activation through SRC. May play a role in the polarity, proliferation and migration of endothelial cells. This Rattus norvegicus (Rat) protein is Angiomotin-like protein 2.